The primary structure comprises 469 residues: UDP-N-acetylmuramate--L-alanine ligase (469 aa).

122–128 (GTHGKTT) is an ATP binding site.

This sequence belongs to the MurCDEF family.

It is found in the cytoplasm. The enzyme catalyses UDP-N-acetyl-alpha-D-muramate + L-alanine + ATP = UDP-N-acetyl-alpha-D-muramoyl-L-alanine + ADP + phosphate + H(+). It participates in cell wall biogenesis; peptidoglycan biosynthesis. Its function is as follows. Cell wall formation. The protein is UDP-N-acetylmuramate--L-alanine ligase of Legionella pneumophila (strain Lens).